The chain runs to 968 residues: Isoleucine--tRNA ligase (968 aa).

A 'HIGH' region motif is present at residues 68 to 78; it reads PYANGALHMGH. Residue glutamate 584 participates in L-isoleucyl-5'-AMP binding. The short motif at 625–629 is the 'KMSKS' region element; sequence KMSKS. Lysine 628 serves as a coordination point for ATP. Positions 938, 941, 958, and 961 each coordinate Zn(2+).

This sequence belongs to the class-I aminoacyl-tRNA synthetase family. IleS type 1 subfamily. Monomer. Zn(2+) serves as cofactor.

The protein localises to the cytoplasm. The catalysed reaction is tRNA(Ile) + L-isoleucine + ATP = L-isoleucyl-tRNA(Ile) + AMP + diphosphate. Functionally, catalyzes the attachment of isoleucine to tRNA(Ile). As IleRS can inadvertently accommodate and process structurally similar amino acids such as valine, to avoid such errors it has two additional distinct tRNA(Ile)-dependent editing activities. One activity is designated as 'pretransfer' editing and involves the hydrolysis of activated Val-AMP. The other activity is designated 'posttransfer' editing and involves deacylation of mischarged Val-tRNA(Ile). This Prochlorococcus marinus (strain MIT 9313) protein is Isoleucine--tRNA ligase.